We begin with the raw amino-acid sequence, 504 residues long: Maturase K (504 aa).

This sequence belongs to the intron maturase 2 family. MatK subfamily.

Its subcellular location is the plastid. It localises to the chloroplast. Usually encoded in the trnK tRNA gene intron. Probably assists in splicing its own and other chloroplast group II introns. The chain is Maturase K from Lablab purpureus (Hyacinth bean).